A 145-amino-acid chain; its full sequence is MKVLVKQLMSKSLFTINLDTTLDVALKSLNANSIHRLPVVDNDGNLKGIITDRDLRLATDSPFLPENNEDRLEKLRLHKVSSIMKQNPVTIEDFSPVVEAAKLMRVTNVGGLPVLDKKGRLIGMVTRSDLLDLLIKVLEPVPPQS.

CBS domains are found at residues 9-66 (MSKS…FLPE) and 84-141 (MKQN…LEPV).

The chain is CBS domain-containing protein DDB_G0289609 from Dictyostelium discoideum (Social amoeba).